The primary structure comprises 195 residues: Nucleoside triphosphate pyrophosphatase (195 aa).

Asp70 functions as the Proton acceptor in the catalytic mechanism.

It belongs to the Maf family. Requires a divalent metal cation as cofactor.

It is found in the cytoplasm. The catalysed reaction is a ribonucleoside 5'-triphosphate + H2O = a ribonucleoside 5'-phosphate + diphosphate + H(+). The enzyme catalyses a 2'-deoxyribonucleoside 5'-triphosphate + H2O = a 2'-deoxyribonucleoside 5'-phosphate + diphosphate + H(+). In terms of biological role, nucleoside triphosphate pyrophosphatase. May have a dual role in cell division arrest and in preventing the incorporation of modified nucleotides into cellular nucleic acids. This Microcystis aeruginosa (strain NIES-843 / IAM M-2473) protein is Nucleoside triphosphate pyrophosphatase.